The chain runs to 95 residues: Aspartyl/glutamyl-tRNA(Asn/Gln) amidotransferase subunit C (95 aa).

It belongs to the GatC family. As to quaternary structure, heterotrimer of A, B and C subunits.

It carries out the reaction L-glutamyl-tRNA(Gln) + L-glutamine + ATP + H2O = L-glutaminyl-tRNA(Gln) + L-glutamate + ADP + phosphate + H(+). The catalysed reaction is L-aspartyl-tRNA(Asn) + L-glutamine + ATP + H2O = L-asparaginyl-tRNA(Asn) + L-glutamate + ADP + phosphate + 2 H(+). Allows the formation of correctly charged Asn-tRNA(Asn) or Gln-tRNA(Gln) through the transamidation of misacylated Asp-tRNA(Asn) or Glu-tRNA(Gln) in organisms which lack either or both of asparaginyl-tRNA or glutaminyl-tRNA synthetases. The reaction takes place in the presence of glutamine and ATP through an activated phospho-Asp-tRNA(Asn) or phospho-Glu-tRNA(Gln). The sequence is that of Aspartyl/glutamyl-tRNA(Asn/Gln) amidotransferase subunit C from Chelativorans sp. (strain BNC1).